The following is a 549-amino-acid chain: Oxygen-dependent choline dehydrogenase (549 aa).

4 to 33 is a binding site for FAD; the sequence is DFVIIGSGSAGSALAYRLSEGGKNSVIVIE. His465 serves as the catalytic Proton acceptor.

This sequence belongs to the GMC oxidoreductase family. It depends on FAD as a cofactor.

It carries out the reaction choline + A = betaine aldehyde + AH2. The catalysed reaction is betaine aldehyde + NAD(+) + H2O = glycine betaine + NADH + 2 H(+). Its pathway is amine and polyamine biosynthesis; betaine biosynthesis via choline pathway; betaine aldehyde from choline (cytochrome c reductase route): step 1/1. Its function is as follows. Involved in the biosynthesis of the osmoprotectant glycine betaine. Catalyzes the oxidation of choline to betaine aldehyde and betaine aldehyde to glycine betaine at the same rate. This Rhizobium johnstonii (strain DSM 114642 / LMG 32736 / 3841) (Rhizobium leguminosarum bv. viciae) protein is Oxygen-dependent choline dehydrogenase.